We begin with the raw amino-acid sequence, 2828 residues long: Matrix-remodeling-associated protein 5 (2828 aa).

Residues 1-26 form the signal peptide; sequence MPKRAHWGALSVVLILLWGHPRVALA. The LRRNT domain maps to 27–55; sequence CPHPCACYVPSEVHCTFRSLASVPAGIAK. 6 LRR repeats span residues 56–77, 80–101, 104–125, 128–149, 152–173, and 184–205; these read HVER…SFAG, KLEL…ALRD, SLQV…TLQG, NLMR…AFNG, SLRL…TFST, and TIRH…MLRN. Residues 217–277 form the LRRCT domain; the sequence is NPWTCDCEMR…HKLKDMTCLK (61 aa). N-linked (GlcNAc...) asparagine glycans are attached at residues asparagine 287 and asparagine 321. 2 Ig-like C2-type domains span residues 481-571 and 575-669; these read PSGA…YRVL and PSTQ…ITVT. 2 disulfide bridges follow: cysteine 501–cysteine 555 and cysteine 599–cysteine 651. Asparagine 633 is a glycosylation site (N-linked (GlcNAc...) asparagine). Disordered stretches follow at residues 671–715, 933–962, 1068–1190, 1204–1275, and 1367–1389; these read KGSG…RRLL, KPTH…EYEP, QGGN…APDI, AWVD…SSET, and EESS…AQPG. Residues 695–708 show a composition bias toward acidic residues; it reads IVEDEGGSGMGDEE. Serine 702 carries O-linked (Xyl...) (chondroitin sulfate) serine glycosylation. Positions 951–962 are enriched in low complexity; the sequence is SSPEPTSSEYEP. Over residues 1090-1107 the composition is skewed to polar residues; the sequence is SKSITLPDSTLGIMSSMS. Residues 1146–1168 are compositionally biased toward basic residues; that stretch reads PSRRRPNGRRRLRPNKFRHRHKQ. 2 stretches are compositionally biased toward polar residues: residues 1169–1190 and 1204–1214; these read TPPT…APDI and AWVDNTVNTPK. A compositionally biased stretch (basic residues) spans 1229-1243; that stretch reads TPRRKHGKRPNKHRY. N-linked (GlcNAc...) asparagine glycosylation is present at asparagine 1403. Residues 1410 to 1434 form an LRR 7 repeat; the sequence is LKELEDVDFTSEFLSSLTVSTPFHQ. 5 disordered regions span residues 1479–1499, 1536–1566, 1579–1603, 1669–1689, and 1700–1719; these read QNHT…PSTI, NPET…SDQD, QVFG…HASH, STTI…KFTD, and KVFG…KPPS. Positions 1542–1566 are enriched in polar residues; sequence TPVNNEGTQHMSGPNELSTPSSDQD. An N-linked (GlcNAc...) asparagine glycan is attached at asparagine 1735. 10 consecutive Ig-like C2-type domains span residues 1853-1946, 1950-2041, 2046-2140, 2146-2239, 2242-2343, 2345-2432, 2440-2534, 2542-2630, 2637-2722, and 2733-2828; these read PQIL…LSVT, PQIL…IRLH, PPVI…LNVQ, ARIT…VDVV, PAKI…KVVT, PATI…KTVW, PKIN…LQLT, PIFH…RLVS, PEAN…PSVT, and PRIT…IHVF. Intrachain disulfides connect cysteine 1875–cysteine 1928 and cysteine 1972–cysteine 2025. N-linked (GlcNAc...) asparagine glycans are attached at residues asparagine 2007 and asparagine 2056. 8 disulfide bridges follow: cysteine 2069–cysteine 2122, cysteine 2168–cysteine 2221, cysteine 2265–cysteine 2324, cysteine 2368–cysteine 2418, cysteine 2466–cysteine 2518, cysteine 2564–cysteine 2616, cysteine 2659–cysteine 2711, and cysteine 2755–cysteine 2810. Residue asparagine 2693 is glycosylated (N-linked (GlcNAc...) asparagine).

As to expression, detected in placenta (at protein level). Detected in cerebrospinal fluid and fibroblasts (at protein level). Highly expressed in kidney, also detected on liver and spleen. Expressed by proximal tubular cells of the kidney (at protein level). Expression highly increases during chronic kidney disease and autosomal dominant polycystic kidney disease, where is detected in cysts.

Its subcellular location is the secreted. In terms of biological role, in kidney, has anti-inflammatory and anti-fibrotic properties by limiting the induction of chemokines, fibronectin and collagen expression in response to TGB1 and pro-inflammatory stimuli. The sequence is that of Matrix-remodeling-associated protein 5 (MXRA5) from Homo sapiens (Human).